Consider the following 126-residue polypeptide: Glycine cleavage system H protein (126 aa).

The Lipoyl-binding domain occupies 21 to 103 (TVTIGISEHA…YDGGWIVKVK (83 aa)). Residue K62 is modified to N6-lipoyllysine.

Belongs to the GcvH family. The glycine cleavage system is composed of four proteins: P, T, L and H. Requires (R)-lipoate as cofactor.

Functionally, the glycine cleavage system catalyzes the degradation of glycine. The H protein shuttles the methylamine group of glycine from the P protein to the T protein. In Vibrio cholerae serotype O1 (strain ATCC 39541 / Classical Ogawa 395 / O395), this protein is Glycine cleavage system H protein.